Here is a 75-residue protein sequence, read N- to C-terminus: Dermaseptin-S11 (75 aa).

The N-terminal stretch at 1-22 (MAFLKKSLFLVLFLGMVSLSIC) is a signal peptide. A propeptide spanning residues 23 to 45 (EEEKRENEDEEEQEDDEQSEEKR) is cleaved from the precursor. The interval 25 to 44 (EKRENEDEEEQEDDEQSEEK) is disordered. Residues 30–41 (EDEEEQEDDEQS) show a composition bias toward acidic residues.

This sequence belongs to the frog skin active peptide (FSAP) family. Dermaseptin subfamily. In terms of tissue distribution, expressed by the skin glands.

It localises to the secreted. It is found in the target cell membrane. Functionally, antimicrobial peptide with activity against Gram-positive and Gram-negative bacteria, and fungi. Has hemolytic activity. The sequence is that of Dermaseptin-S11 from Phyllomedusa sauvagei (Sauvage's leaf frog).